The following is a 175-amino-acid chain: Riboflavin kinase (175 aa).

54–59 (GLGEGK) is a CDP binding site. Mg(2+) contacts are provided by threonine 83 and asparagine 85. Residues threonine 142 and glutamate 150 each coordinate FMN. Position 155–158 (155–158 (FHLR)) interacts with CDP.

It belongs to the archaeal riboflavin kinase family. It depends on Mg(2+) as a cofactor.

It catalyses the reaction riboflavin + CTP = CDP + FMN + H(+). Its pathway is cofactor biosynthesis; FMN biosynthesis; FMN from riboflavin (CTP route): step 1/1. In terms of biological role, catalyzes the CTP-dependent phosphorylation of riboflavin (vitamin B2) to form flavin mononucleotide (FMN). This is Riboflavin kinase from Saccharolobus solfataricus (strain ATCC 35092 / DSM 1617 / JCM 11322 / P2) (Sulfolobus solfataricus).